The sequence spans 472 residues: H(+)/Cl(-) exchange transporter ClcA (472 aa).

At 1-32 the chain is on the cytoplasmic side; it reads MKAETPSFEAHQFVRVRRGDAVRRLIQRDKTP. A helical membrane pass occupies residues 33–69; that stretch reads LAVLFMAAVVGTLAGLVGVAFEKSVNWVQNQRIGALA. Over 70-76 the chain is Periplasmic; it reads QVADHWY. A helical membrane pass occupies residues 77 to 100; sequence LVWPLAFILSALLAMVGYFLVRRF. The short motif at 106–110 is the Selectivity filter part_1 element; that stretch reads GSGIP. A chloride-binding site is contributed by Ser-107. The segment at residues 109 to 116 is an intramembrane region (helical); the sequence is IPEIEGAL. Residues 117-123 lie on the Cytoplasmic side of the membrane; the sequence is EELRPVR. The next 2 membrane-spanning stretches (helical) occupy residues 124 to 141 and 148 to 166; these read WWRVLPVKFVGGMGTLGA and EGPMVQLGGNIGRMVLDVF. Residues 146 to 150 carry the Selectivity filter part_2 motif; the sequence is GREGP. The Cytoplasmic segment spans residues 167 to 176; that stretch reads RMRSPEARHT. 2 consecutive intramembrane regions (helical) follow at residues 177–189 and 193–201; these read LLATGAASGLSAA and PLAGILFII. Over 202-214 the chain is Cytoplasmic; it reads EEMRPQFRYNLIS. The helical transmembrane segment at 215 to 232 threads the bilayer; the sequence is IKAVFTGVIMSSIVFRIF. Residues 233-252 are Periplasmic-facing; it reads NGEAAIIEVGKLSNAPVNTL. A helical transmembrane segment spans residues 253–281; that stretch reads WLYLVLGMLFGCFGPLFNFLVLRTQDLFQ. The Cytoplasmic segment spans residues 282 to 287; sequence RIHGGN. Residues 288–309 form a helical membrane-spanning segment; the sequence is IKKWVLIGGLIGGLCGLLGLMQ. The Periplasmic segment spans residues 310-329; that stretch reads PSAVGGGFNLIPIAAAGNFS. 2 helical membrane-spanning segments follow: residues 330–349 and 355–376; these read VGLLLFIFIARVVTTLICFS and GIFAPMLALGTLLGTAFGMAAI. The short motif at 355-359 is the Selectivity filter part_3 element; that stretch reads GIFAP. Positions 356 and 357 each coordinate chloride. The Periplasmic portion of the chain corresponds to 377–386; sequence PLFPAYHLDA. Residues 387–401 constitute an intramembrane region (helical); sequence GTFAIAGMGALLAAS. The note=Loop between two helices intramembrane region spans 402–404; the sequence is VRA. Residues 405–416 constitute an intramembrane region (helical); sequence PLTGIVLVLEMT. The segment at residues 417-421 is an intramembrane region (note=Loop between two helices); that stretch reads DNYQL. The chain crosses the membrane as a helical span at residues 422-438; the sequence is ILPMIITCLGATLLAQF. The Cytoplasmic portion of the chain corresponds to 439 to 472; it reads LGGKPLYSTILQRTLAKQEAEQAAKAQQAPRENT. A chloride-binding site is contributed by Tyr-445.

Belongs to the chloride channel (TC 2.A.49) family. ClcA subfamily. As to quaternary structure, homodimer.

It is found in the cell inner membrane. It carries out the reaction 2 chloride(in) + H(+)(out) = 2 chloride(out) + H(+)(in). Functionally, proton-coupled chloride transporter. Functions as antiport system and exchanges two chloride ions for 1 proton. Probably acts as an electrical shunt for an outwardly-directed proton pump that is linked to amino acid decarboxylation, as part of the extreme acid resistance (XAR) response. The protein is H(+)/Cl(-) exchange transporter ClcA of Klebsiella pneumoniae subsp. pneumoniae (strain ATCC 700721 / MGH 78578).